The sequence spans 343 residues: Tetraacyldisaccharide 4'-kinase (343 aa).

Residue 55–62 (TVGGEGKT) participates in ATP binding.

Belongs to the LpxK family.

It carries out the reaction a lipid A disaccharide + ATP = a lipid IVA + ADP + H(+). It functions in the pathway glycolipid biosynthesis; lipid IV(A) biosynthesis; lipid IV(A) from (3R)-3-hydroxytetradecanoyl-[acyl-carrier-protein] and UDP-N-acetyl-alpha-D-glucosamine: step 6/6. Its function is as follows. Transfers the gamma-phosphate of ATP to the 4'-position of a tetraacyldisaccharide 1-phosphate intermediate (termed DS-1-P) to form tetraacyldisaccharide 1,4'-bis-phosphate (lipid IVA). The chain is Tetraacyldisaccharide 4'-kinase from Chelativorans sp. (strain BNC1).